The primary structure comprises 136 residues: MLQPKNTKFRKMHKGKNRGLAIGTNVHFGLYGLKAITRGRLKSSQIESARRAITRAIKRQGKIWIRIFPDKPITKKPLEVRMGKGKGNVEYWVALVQPGKILYEISGVSEELSRIAFKLAAAKLPVKTMFVTKLVM.

This sequence belongs to the universal ribosomal protein uL16 family. As to quaternary structure, part of the 50S ribosomal subunit.

Functionally, binds 23S rRNA and is also seen to make contacts with the A and possibly P site tRNAs. The sequence is that of Large ribosomal subunit protein uL16 from Buchnera aphidicola subsp. Baizongia pistaciae (strain Bp).